Here is a 142-residue protein sequence, read N- to C-terminus: MQTATVLVEKSDYRPSEDEPFMNDRQLEYFKQKLLAWKEEILRESRETVSHLQKETENHADLADRASSETDRALELRTRDRQRKLISKIDQALRRVEDGSYGYCEETGEPIGLARLEARPTATMSVEAQERHERRERVHRDD.

Disordered stretches follow at residues 1–20 (MQTA…EDEP), 51–70 (HLQK…SSET), and 119–142 (RPTA…HRDD). The segment at 104-128 (CEETGEPIGLARLEARPTATMSVEA) adopts a dksA C4-type zinc-finger fold. Residues 128 to 142 (AQERHERRERVHRDD) are compositionally biased toward basic and acidic residues.

The protein belongs to the DksA family. As to quaternary structure, interacts directly with the RNA polymerase.

Its subcellular location is the cytoplasm. In terms of biological role, transcription factor that acts by binding directly to the RNA polymerase (RNAP). Required for negative regulation of rRNA expression and positive regulation of several amino acid biosynthesis promoters. The protein is RNA polymerase-binding transcription factor DksA of Caulobacter vibrioides (strain ATCC 19089 / CIP 103742 / CB 15) (Caulobacter crescentus).